Reading from the N-terminus, the 514-residue chain is AAA-ATPase ASD, mitochondrial (514 aa).

Residues 7–24 (VWTNTGSALASLVFIYTI) form a helical membrane-spanning segment. ATP is bound at residue 250-257 (GPPGTGKS). Disordered stretches follow at residues 311–342 (GQRKQKKDEEEDEDETSPIEKQMKKDQGENKG) and 467–514 (KEEA…TMKD). Basic and acidic residues-rich tracts occupy residues 331-342 (KQMKKDQGENKG) and 467-502 (KEEAKRRIEDEEKKKKEEEEIKRKKREEKKIKKEEK).

This sequence belongs to the AAA ATPase family. BCS1 subfamily. Mg(2+) is required as a cofactor. In terms of tissue distribution, expressed in seeds, specifically in the embryo.

It is found in the mitochondrion membrane. The enzyme catalyses ATP + H2O = ADP + phosphate + H(+). Required to regulate morphology and anatomy during seed maturation. This Arabidopsis thaliana (Mouse-ear cress) protein is AAA-ATPase ASD, mitochondrial (AATP1).